The sequence spans 102 residues: Large ribosomal subunit protein uL24 (102 aa).

Belongs to the universal ribosomal protein uL24 family. Part of the 50S ribosomal subunit.

Functionally, one of two assembly initiator proteins, it binds directly to the 5'-end of the 23S rRNA, where it nucleates assembly of the 50S subunit. Its function is as follows. One of the proteins that surrounds the polypeptide exit tunnel on the outside of the subunit. The protein is Large ribosomal subunit protein uL24 of Alkaliphilus oremlandii (strain OhILAs) (Clostridium oremlandii (strain OhILAs)).